We begin with the raw amino-acid sequence, 313 residues long: 3'-5' exoribonuclease YhaM (313 aa).

A DNA-binding region (OB) is located at residues 22 to 90; that stretch reads SSVKGTASNG…QLKIRQIRQA (69 aa). In terms of domain architecture, HD spans 163 to 279; it reads HVVSMLRLAK…LHQIDLMDAS (117 aa).

This sequence belongs to the YhaM family.

Its function is as follows. Shows a 3'-5' exoribonuclease activity. The chain is 3'-5' exoribonuclease YhaM from Listeria innocua serovar 6a (strain ATCC BAA-680 / CLIP 11262).